Here is a 300-residue protein sequence, read N- to C-terminus: D-alanine--D-alanine ligase (300 aa).

The ATP-grasp domain occupies 99–293 (KKILKYANIN…FAELLNSIVK (195 aa)). 126 to 181 (IEKIGYPVFVKPNSGGSSVATNLVKDKEGIKEAVELALKYDKEVMIENYTKGEEIT) is a binding site for ATP. Mg(2+) is bound by residues Asp-248, Glu-260, and Asn-262.

This sequence belongs to the D-alanine--D-alanine ligase family. The cofactor is Mg(2+). Mn(2+) serves as cofactor.

The protein resides in the cytoplasm. The enzyme catalyses 2 D-alanine + ATP = D-alanyl-D-alanine + ADP + phosphate + H(+). The protein operates within cell wall biogenesis; peptidoglycan biosynthesis. Cell wall formation. In Clostridium botulinum (strain Langeland / NCTC 10281 / Type F), this protein is D-alanine--D-alanine ligase.